The chain runs to 97 residues: Putative membrane protein insertion efficiency factor (97 aa).

Belongs to the UPF0161 family.

The protein resides in the cell membrane. Functionally, could be involved in insertion of integral membrane proteins into the membrane. This is Putative membrane protein insertion efficiency factor from Lactobacillus helveticus (strain DPC 4571).